The following is a 474-amino-acid chain: Glycogen synthase (474 aa).

Lys-15 contributes to the ADP-alpha-D-glucose binding site.

This sequence belongs to the glycosyltransferase 1 family. Bacterial/plant glycogen synthase subfamily.

The enzyme catalyses [(1-&gt;4)-alpha-D-glucosyl](n) + ADP-alpha-D-glucose = [(1-&gt;4)-alpha-D-glucosyl](n+1) + ADP + H(+). Its pathway is glycan biosynthesis; glycogen biosynthesis. In terms of biological role, synthesizes alpha-1,4-glucan chains using ADP-glucose. This is Glycogen synthase from Finegoldia magna (strain ATCC 29328 / DSM 20472 / WAL 2508) (Peptostreptococcus magnus).